The chain runs to 520 residues: Cytochrome P450 72A68 (520 aa).

Residues 11 to 31 (IILITVTFGLVYAWRVLNWMW) traverse the membrane as a helical segment. Heme is bound at residue C466.

It belongs to the cytochrome P450 family. Requires heme as cofactor.

It localises to the membrane. It carries out the reaction oleanolate + 3 reduced [NADPH--hemoprotein reductase] + 3 O2 = gypsogenate + 3 oxidized [NADPH--hemoprotein reductase] + 4 H2O + 4 H(+). In terms of biological role, catalyzes the carboxylation of oleanolic acid at the C-23 position to form gypsogenic acid. Involved in the hemolytic saponin biosynthetic pathway. This Medicago truncatula (Barrel medic) protein is Cytochrome P450 72A68.